Here is a 323-residue protein sequence, read N- to C-terminus: Ankyrin repeat and SOCS box protein 11 (323 aa).

6 ANK repeats span residues 64–93, 97–126, 130–159, 162–191, 195–224, and 227–256; these read ADRSPLHEAAAQGRLLALKTLIAQGVNVNL, NRVSSLHEACLGGHVACAKALLENGAHVNG, HGATPLFNACCSGSAACVNVLLEFGAKAQL, HLASPIHEAVKRGNRECMEILLANNVNIDQ, HLGTPLYAACTYQRLDCVKKLLELGANVNH, and WLDTPLHAAAKQNSVEIIHLLIDYGANLKC. The SOCS box domain maps to 273 to 323; it reads SVEQALLLREGPPALSQLCRLCVRKCLGRNCHKTIHKLYLPDPLEKFLLYQ.

Belongs to the ankyrin SOCS box (ASB) family. As to quaternary structure, substrate-recognition component of the ECS(ASB11) complex, composed of ASB11, CUL5, ELOB, ELOC and RNF7/RBX2.

Its subcellular location is the endoplasmic reticulum. It participates in protein modification; protein ubiquitination. Its function is as follows. Substrate-recognition component of a cullin-5-RING E3 ubiquitin-protein ligase complex (ECS complex, also named CRL5 complex), which mediates the ubiquitination and subsequent proteasomal degradation of target proteins, such as BIK, DIRAS2 and RPN1. The ECS(ASB11) complex acts as a regulator of the endoplasmic reticulum unfolded protein response by mediating ubiquitination and degradation of BIK. The protein is Ankyrin repeat and SOCS box protein 11 (ASB11) of Bos taurus (Bovine).